The chain runs to 359 residues: Peptide chain release factor 1 (359 aa).

The residue at position 236 (Q236) is an N5-methylglutamine.

The protein belongs to the prokaryotic/mitochondrial release factor family. In terms of processing, methylated by PrmC. Methylation increases the termination efficiency of RF1.

It localises to the cytoplasm. Peptide chain release factor 1 directs the termination of translation in response to the peptide chain termination codons UAG and UAA. The protein is Peptide chain release factor 1 of Streptococcus pyogenes serotype M1.